Here is a 494-residue protein sequence, read N- to C-terminus: Cytochrome P450 monooxygenase ccsD (494 aa).

A helical membrane pass occupies residues 5–25 (ISPRTLVLLAVTCSLLVLYFS). Cys438 lines the heme pocket. N-linked (GlcNAc...) asparagine glycosylation is found at Asn445 and Asn477.

Belongs to the cytochrome P450 family. Heme serves as cofactor.

It is found in the membrane. It participates in mycotoxin biosynthesis. In terms of biological role, cytochrome P450 monooxygenase; part of the gene cluster that mediates the biosynthesis of a family of the mycotoxins cytochalasins E and K. The hybrid PKS-NRPS synthetase ccsA and the enoyl reductase ccsC are responsible for fusion of phenylalanine with an octaketide backbone and subsequent release of the stable tetramic acid precursor. The polyketide synthase module (PKS) of the PKS-NRPS ccsA is responsible for the synthesis of the octaketide backbone. The downstream nonribosomal peptide synthetase (NRPS) amidates the carboxyl end of the octaketide with a phenylalanine. A reductase-like domain (R) at the C-terminus catalyzes the reductive release of the polyketide-amino acid intermediate. Because ccsA lacks a designated enoylreductase (ER) domain, the required activity is provided the enoyl reductase ccsC. Upon formation of the 11-membered carbocycle-fused perhydroisoindolone intermediate, a number of oxidative steps are required to afford the final cytochalasin E and K, including two hydroxylations at C17 and C18, one alcohol oxidation at C17, one epoxidation at C6 and C7 and two Baeyer-Villiger oxidations. The oxidative modification at C17, C18 and the C6-C7 epoxidation are likely to be catalyzed by the two cytochrome P450 oxygenases ccsD and ccsG. CcsD may be responsible for the epoxidation of the C6-C7 double bond. CcsG may be responsible for the successive oxidative modifications at C17 and C18. The double Baeyer-Villiger oxidations of ketocytochalasin to precytochalasin and cytochalasin Z(16) are among the final steps leading to cytochalasin E and K and are catalyzed by ccsB. The first oxygen insertion step follows that of the classic BVMO mechanism, generating the ester precytochalasin. Release of precytochalasin into an aqueous environment can generate the shunt product iso-precytochalasin through spontaneous isomerization. Alternatively, precytochalasin can undergo further oxidation by ccsB to yield the in-line carbonate-containing cytochalasin Z(16). Cytochalasin Z(16) is a precursor to cytochalasin E and cytochalasin K, whereas iso-precytochalasin is a precursor to cytochalasin Z(17) and rosellichalasin. The hydrolyase ccsE may catalyze hydrolysis of epoxide bond in cytochalasin E to afford cytochalasin K. The function of ccsF has not been assigned but it may play a role in post-PKS-NRPS biosynthetic step, resistance or transport of cytochalasins and related PKS-NRPS products. The protein is Cytochrome P450 monooxygenase ccsD of Aspergillus clavatus (strain ATCC 1007 / CBS 513.65 / DSM 816 / NCTC 3887 / NRRL 1 / QM 1276 / 107).